Here is a 179-residue protein sequence, read N- to C-terminus: Protein YjaZ (179 aa).

This is Protein YjaZ from Escherichia coli (strain K12).